A 92-amino-acid chain; its full sequence is UPF0213 protein MGAS9429_Spy1198 (92 aa).

Residues 4–80 (KKAYMYVLEC…KRKTRSQKLA (77 aa)) form the GIY-YIG domain.

This sequence belongs to the UPF0213 family.

This Streptococcus pyogenes serotype M12 (strain MGAS9429) protein is UPF0213 protein MGAS9429_Spy1198.